The sequence spans 861 residues: Nuclear pore complex protein NUP93A (861 aa).

Belongs to the nucleoporin interacting component (NIC) family. In terms of assembly, part of the nuclear pore complex (NPC). The NPC has an eight-fold symmetrical structure comprising a central transport channel and two rings, the cytoplasmic and nuclear rings, to which eight filaments are attached. The cytoplasmic filaments have loose ends, while the nuclear filaments are joined in a distal ring, forming a nuclear basket. NPCs are highly dynamic in configuration and composition, and can be devided in 3 subcomplexes, the NUP62 subcomplex, the NUP107-160 subcomplex and the NUP93 subcomplex, containing approximately 30 different nucleoporin proteins.

The protein resides in the nucleus envelope. The protein localises to the nucleus. It is found in the nuclear pore complex. In Arabidopsis thaliana (Mouse-ear cress), this protein is Nuclear pore complex protein NUP93A.